The chain runs to 91 residues: Small ribosomal subunit protein uS19 (91 aa).

Belongs to the universal ribosomal protein uS19 family.

Its function is as follows. Protein S19 forms a complex with S13 that binds strongly to the 16S ribosomal RNA. This chain is Small ribosomal subunit protein uS19, found in Chromohalobacter salexigens (strain ATCC BAA-138 / DSM 3043 / CIP 106854 / NCIMB 13768 / 1H11).